A 488-amino-acid polypeptide reads, in one-letter code: Katanin p60 ATPase-containing subunit A-like 1 (488 aa).

Residue Met-1 is modified to N-acetylmethionine. The interval 128–179 (GAGARGLVGRAHQISKSDKAASRDKDYRARGRDDKARKNMQDGASDGEIPKF) is disordered. The span at 142–167 (SKSDKAASRDKDYRARGRDDKARKNM) shows a compositional bias: basic and acidic residues. Ser-172 is modified (phosphoserine). Residue 246 to 253 (GPPGTGKT) coordinates ATP.

Belongs to the AAA ATPase family. Katanin p60 subunit A1 subfamily. A-like 1 sub-subfamily. Interacts with KATNB1 and KATNBL1.

The protein localises to the cytoplasm. The protein resides in the cytoskeleton. It localises to the spindle pole. It is found in the spindle. The catalysed reaction is n ATP + n H2O + a microtubule = n ADP + n phosphate + (n+1) alpha/beta tubulin heterodimers.. In terms of biological role, regulates microtubule dynamics in Sertoli cells, a process that is essential for spermiogenesis and male fertility. Severs microtubules in an ATP-dependent manner, promoting rapid reorganization of cellular microtubule arrays. Has microtubule-severing activity in vitro. The sequence is that of Katanin p60 ATPase-containing subunit A-like 1 (Katnal1) from Rattus norvegicus (Rat).